A 201-amino-acid chain; its full sequence is NAD(P)H dehydrogenase (quinone) (201 aa).

The 189-residue stretch at 4 to 192 folds into the Flavodoxin-like domain; the sequence is VLVLYYSSYG…TIARFQGQHI (189 aa). FMN contacts are provided by residues 10–15 and 80–82; these read SSYGHV and TRF. Tyr12 contacts NAD(+). Position 100 (Trp100) interacts with substrate. FMN contacts are provided by residues 115–121 and His136; that span reads STASQHG.

It belongs to the WrbA family. FMN is required as a cofactor.

It catalyses the reaction a quinone + NADH + H(+) = a quinol + NAD(+). The catalysed reaction is a quinone + NADPH + H(+) = a quinol + NADP(+). The sequence is that of NAD(P)H dehydrogenase (quinone) from Chromohalobacter salexigens (strain ATCC BAA-138 / DSM 3043 / CIP 106854 / NCIMB 13768 / 1H11).